Here is a 3391-residue protein sequence, read N- to C-terminus: Genome polyprotein (3391 aa).

Residues 1–15 (MNNQRKKAKNTPFNM) are interaction with host EXOC1. Residues 1 to 101 (MNNQRKKAKN…LNILNRRRRS (101 aa)) lie on the Cytoplasmic side of the membrane. Residues 37–72 (MLQGRGPLKLFMALVAFLRFLTIPPTAGILKRWGTI) are hydrophobic; homodimerization of capsid protein C. Residues 101 to 114 (SAGMIIMLIPTVMA) constitute a propeptide, ER anchor for the capsid protein C, removed in mature form by serine protease NS3. Residues 102-122 (AGMIIMLIPTVMAFHLTTRNG) traverse the membrane as a helical segment. Topologically, residues 123–238 (EPHMIVSRQE…GAWKHAQRIE (116 aa)) are extracellular. N-linked (GlcNAc...) asparagine; by host glycosylation is present at Asn183. The chain crosses the membrane as a helical span at residues 239-259 (TWILRHPGFTIMAAILAYTIG). Residues 260-265 (TTHFQR) lie on the Cytoplasmic side of the membrane. Residues 266-280 (ALIFILLTAVAPSMT) traverse the membrane as a helical segment. Over 281–725 (MRCIGISNRD…LHQVFGAIYG (445 aa)) the chain is Extracellular. 4 disulfides stabilise this stretch: Cys283/Cys310, Cys340/Cys401, Cys354/Cys385, and Cys372/Cys396. A glycan (N-linked (GlcNAc...) asparagine; by host) is linked at Asn347. The fusion peptide stretch occupies residues 378–391 (DRGWGNGCGLFGKG). N-linked (GlcNAc...) asparagine; by host glycosylation is present at Asn433. Intrachain disulfides connect Cys465/Cys565 and Cys582/Cys613. A helical transmembrane segment spans residues 726–746 (AAFSGVSWTMKILIGVIITWI). Residues 747 to 752 (GMNSRS) lie on the Cytoplasmic side of the membrane. The chain crosses the membrane as a helical span at residues 753–773 (TSLSVSLVLVGIVTLYLGVMV). Over 774 to 1195 (QADSGCVVSW…MVGATMTDDI (422 aa)) the chain is Extracellular. Disulfide bonds link Cys779/Cys790, Cys830/Cys918, Cys954/Cys998, Cys1055/Cys1104, Cys1066/Cys1088, and Cys1087/Cys1091. Residues Asn905 and Asn982 are each glycosylated (N-linked (GlcNAc...) asparagine; by host). The N-linked (GlcNAc...) asparagine; by host glycan is linked to Asn1134. A helical transmembrane segment spans residues 1196-1220 (GMGVTYLALLAAFKVRPTFAAGLLL). At 1221–1226 (RKLTSK) the chain is on the cytoplasmic side. Residues 1227-1245 (ELMMTTIGIVLLSQSTIPE) form a helical membrane-spanning segment. At 1246-1269 (TILELTDALALGMMVLKMVRNMEK) the chain is on the lumenal side. The helical transmembrane segment at 1270-1290 (YQLAVTIMAILCVPNAVILQN) threads the bilayer. Ala1291 is a topological domain (cytoplasmic). The chain crosses the membrane as a helical span at residues 1292–1310 (WKVSCTILAVVSVSPLLLT). The Lumenal segment spans residues 1311–1317 (SSQQKTD). Residues 1318-1338 (WIPLALTIKGLNPTAIFLTTL) form a helical membrane-spanning segment. The Cytoplasmic segment spans residues 1339–1346 (SRTSKKRS). The chain crosses the membrane as a helical span at residues 1347-1367 (WPLNEAIMAVGMVSILASSLL). The Lumenal portion of the chain corresponds to 1368-1370 (KND). The chain crosses the membrane as a helical span at residues 1371–1391 (IPMTGPLVAGGLLTVCYVLTG). At 1392–1447 (RSADLELERAADVKWEDQAEISGSSPILSITISEDGSMSIKNEEEEQTLTILIRTG) the chain is on the cytoplasmic side. The segment at 1398 to 1437 (LERAADVKWEDQAEISGSSPILSITISEDGSMSIKNEEEE) is interacts with and activates NS3 protease. An intramembrane region (helical) is located at residues 1448 to 1468 (LLVISGLFPVSIPITAAAWYL). The Cytoplasmic segment spans residues 1469–2147 (WEVKKQRAGV…LSELPETLET (679 aa)). The Peptidase S7 domain maps to 1476–1653 (AGVLWDVPSP…EKSIEDNPEI (178 aa)). Catalysis depends on charge relay system; for serine protease NS3 activity residues His1526, Asp1550, and Ser1610. In terms of domain architecture, Helicase ATP-binding spans 1655–1811 (DDIFRKRRLT…QSNAPIIDEE (157 aa)). The interval 1659–1662 (RKRR) is important for RNA-binding. 1668–1675 (LHPGAGKT) lines the ATP pocket. Residues 1759–1762 (DEAH) carry the DEAH box motif. Positions 1821–1988 (SGHEWVTDFK…IIPSMFEPER (168 aa)) constitute a Helicase C-terminal domain. At Lys1863 the chain carries N6-acetyllysine; by host. Residues 2148-2168 (LLLLTLLATVTGGIFLFLMSG) form a helical membrane-spanning segment. Topologically, residues 2169–2170 (RG) are lumenal. An intramembrane region (helical) is located at residues 2171–2191 (IGKMTLGMCCIITASVLLWYA). Residue Gln2192 is a topological domain, lumenal. The chain crosses the membrane as a helical span at residues 2193-2213 (IQPHWIAASIILEFFLIVLLI). Over 2214 to 2228 (PEPEKQRTPQDNQLT) the chain is Cytoplasmic. A helical transmembrane segment spans residues 2229 to 2249 (YVVIAILTVVAATMANEMGFL). Residues 2250–2274 (EKTKKDLGLGSIATQQPESNILDID) are Lumenal-facing. Positions 2275–2295 (LRPASAWTLYAVATTFVTPML) form an intramembrane region, helical. At 2296–2316 (RHSIENSSVNVSLTAIANQAT) the chain is on the lumenal side. 2 N-linked (GlcNAc...) asparagine; by host glycosylation sites follow: Asn2301 and Asn2305. Positions 2317 to 2337 (VLMGLGKGWPLSKMDIGVPLL) form an intramembrane region, helical. At 2338–2347 (AIGCYSQVNP) the chain is on the lumenal side. Residues 2348–2368 (ITLTAALLLLVAHYAIIGPGL) traverse the membrane as a helical segment. The Cytoplasmic segment spans residues 2369–2413 (QAKATREAQKRAAAGIMKNPTVDGITVIDLDPIPYDPKFEKQLGQ). Residues 2414–2434 (VMLLVLCVTQVLMMRTTWALC) form a helical membrane-spanning segment. The Lumenal segment spans residues 2435-2459 (EALTLATGPISTLWEGNPGRFWNTT). Residue Asn2457 is glycosylated (N-linked (GlcNAc...) asparagine; by host). The chain crosses the membrane as a helical span at residues 2460–2480 (IAVSMANIFRGSYLAGAGLLF). Residues 2481-3391 (SIMKNTTNTR…REEEEAGVLW (911 aa)) lie on the Cytoplasmic side of the membrane. The 263-residue stretch at 2493-2755 (TGNIGETLGE…DVDLGSGTRN (263 aa)) folds into the mRNA cap 0-1 NS5-type MT domain. An S-adenosyl-L-methionine-binding site is contributed by Ser2547. Ser2547 is modified (phosphoserine). The active-site For 2'-O-MTase activity is Lys2552. An SUMO-interacting motif motif is present at residues 2568–2571 (VVDL). Residues Gly2577, Trp2578, Thr2595, Lys2596, Asp2622, and Val2623 each contribute to the S-adenosyl-L-methionine site. Asp2637 acts as the For 2'-O-MTase activity in catalysis. Ile2638 lines the S-adenosyl-L-methionine pocket. Catalysis depends on for 2'-O-MTase activity residues Lys2672 and Glu2708. An S-adenosyl-L-methionine-binding site is contributed by Tyr2710. Residues Glu2929, His2933, Cys2938, and Cys2941 each contribute to the Zn(2+) site. In terms of domain architecture, RdRp catalytic spans 3020-3169 (AMYADDTAGW…PLDDRFASAL (150 aa)). 3 residues coordinate Zn(2+): His3203, Cys3219, and Cys3338.

This sequence in the N-terminal section; belongs to the class I-like SAM-binding methyltransferase superfamily. mRNA cap 0-1 NS5-type methyltransferase family. In terms of assembly, homodimer. Interacts (via N-terminus) with host EXOC1 (via C-terminus); this interaction results in EXOC1 degradation through the proteasome degradation pathway. Forms heterodimers with envelope protein E in the endoplasmic reticulum and Golgi. As to quaternary structure, homodimer; in the endoplasmic reticulum and Golgi. Interacts with protein prM. Interacts with non-structural protein 1. In terms of assembly, homodimer; Homohexamer when secreted. Interacts with envelope protein E. Interacts with host PRKAA1. Interacts (via N-terminus) with serine protease NS3. As to quaternary structure, forms a heterodimer with serine protease NS3. May form homooligomers. In terms of assembly, forms a heterodimer with NS2B. Interacts with NS4B. Interacts with unphosphorylated RNA-directed RNA polymerase NS5; this interaction stimulates RNA-directed RNA polymerase NS5 guanylyltransferase activity. Interacts with host SHFL. Interacts with host MAVS; this interaction inhibits the synthesis of IFN-beta. Interacts with host SHFL. Interacts with host AUP1; the interaction occurs in the presence of Dengue virus NS4B and induces lipophagy which facilitates production of virus progeny particles. May interact with host SRPRA and SEC61G. As to quaternary structure, interacts with serine protease NS3. In terms of assembly, homodimer. Interacts with host STAT2; this interaction inhibits the phosphorylation of the latter, and, when all viral proteins are present (polyprotein), targets STAT2 for degradation. Interacts with serine protease NS3. Interacts with host PAF1 complex; the interaction may prevent the recruitment of the PAF1 complex to interferon-responsive genes, and thus reduces the immune response. Specific enzymatic cleavages in vivo yield mature proteins. Cleavages in the lumen of endoplasmic reticulum are performed by host signal peptidase, whereas cleavages in the cytoplasmic side are performed by serine protease NS3. Signal cleavage at the 2K-4B site requires a prior NS3 protease-mediated cleavage at the 4A-2K site. Post-translationally, cleaved in post-Golgi vesicles by a host furin, releasing the mature small envelope protein M, and peptide pr. This cleavage is incomplete as up to 30% of viral particles still carry uncleaved prM. In terms of processing, N-glycosylated. N-glycosylated. The excreted form is glycosylated and this is required for efficient secretion of the protein from infected cells. Post-translationally, acetylated by host KAT5. Acetylation modulates NS3 RNA-binding and unwinding activities and plays an important positive role for viral replication. In terms of processing, phosphorylated on serines residues. This phosphorylation may trigger NS5 nuclear localization. Sumoylation of RNA-directed RNA polymerase NS5 increases NS5 protein stability allowing proper viral RNA replication.

The protein resides in the virion. It localises to the host nucleus. It is found in the host cytoplasm. Its subcellular location is the host perinuclear region. The protein localises to the secreted. The protein resides in the virion membrane. It localises to the host endoplasmic reticulum membrane. It is found in the host mitochondrion. It carries out the reaction Selective hydrolysis of -Xaa-Xaa-|-Yaa- bonds in which each of the Xaa can be either Arg or Lys and Yaa can be either Ser or Ala.. The catalysed reaction is RNA(n) + a ribonucleoside 5'-triphosphate = RNA(n+1) + diphosphate. It catalyses the reaction a ribonucleoside 5'-triphosphate + H2O = a ribonucleoside 5'-diphosphate + phosphate + H(+). The enzyme catalyses ATP + H2O = ADP + phosphate + H(+). It carries out the reaction a 5'-end (5'-triphosphoguanosine)-ribonucleoside in mRNA + S-adenosyl-L-methionine = a 5'-end (N(7)-methyl 5'-triphosphoguanosine)-ribonucleoside in mRNA + S-adenosyl-L-homocysteine. The catalysed reaction is a 5'-end (N(7)-methyl 5'-triphosphoguanosine)-ribonucleoside in mRNA + S-adenosyl-L-methionine = a 5'-end (N(7)-methyl 5'-triphosphoguanosine)-(2'-O-methyl-ribonucleoside) in mRNA + S-adenosyl-L-homocysteine + H(+). Plays a role in virus budding by binding to the cell membrane and gathering the viral RNA into a nucleocapsid that forms the core of a mature virus particle. During virus entry, may induce genome penetration into the host cytoplasm after hemifusion induced by the surface proteins. Can migrate to the cell nucleus where it modulates host functions. Overcomes the anti-viral effects of host EXOC1 by sequestering and degrading the latter through the proteasome degradation pathway. Its function is as follows. Inhibits RNA silencing by interfering with host Dicer. In terms of biological role, prevents premature fusion activity of envelope proteins in trans-Golgi by binding to envelope protein E at pH6.0. After virion release in extracellular space, gets dissociated from E dimers. Functionally, acts as a chaperone for envelope protein E during intracellular virion assembly by masking and inactivating envelope protein E fusion peptide. prM is the only viral peptide matured by host furin in the trans-Golgi network probably to avoid catastrophic activation of the viral fusion activity in acidic Golgi compartment prior to virion release. prM-E cleavage is inefficient, and many virions are only partially matured. These uncleaved prM would play a role in immune evasion. May play a role in virus budding. Exerts cytotoxic effects by activating a mitochondrial apoptotic pathway through M ectodomain. May display a viroporin activity. Its function is as follows. Binds to host cell surface receptor and mediates fusion between viral and cellular membranes. Envelope protein is synthesized in the endoplasmic reticulum in the form of heterodimer with protein prM. They play a role in virion budding in the ER, and the newly formed immature particle is covered with 60 spikes composed of heterodimer between precursor prM and envelope protein E. The virion is transported to the Golgi apparatus where the low pH causes dissociation of PrM-E heterodimers and formation of E homodimers. prM-E cleavage is inefficient, and many virions are only partially matured. These uncleaved prM would play a role in immune evasion. In terms of biological role, involved in immune evasion, pathogenesis and viral replication. Once cleaved off the polyprotein, is targeted to three destinations: the viral replication cycle, the plasma membrane and the extracellular compartment. Essential for viral replication. Required for formation of the replication complex and recruitment of other non-structural proteins to the ER-derived membrane structures. Excreted as a hexameric lipoparticle that plays a role against host immune response. Antagonizing the complement function. Binds to the host macrophages and dendritic cells. Inhibits signal transduction originating from Toll-like receptor 3 (TLR3). Mediates complement activation, which may contribute to the pathogenesis of the vascular leakage that occurs in severe dengue disease. Activates autophagy through the AMPK/ERK/mTOR signaling pathway. Mechanistically, acts as the assembly platform for STK11-AMPK interactions and promotes STK11-AMPK interactions. In turn, promotes phosphorylation of the AMPK kinase structural domain and activates AMPK, thereby positively regulating the AMPK/ERK/mTOR signaling pathway and inducing autophagy. Functionally, disrupts the host endothelial glycocalyx layer of host pulmonary microvascular endothelial cells, inducing degradation of sialic acid and shedding of heparan sulfate proteoglycans. NS1 induces expression of sialidases, heparanase, and activates cathepsin L, which activates heparanase via enzymatic cleavage. These effects are probably linked to the endothelial hyperpermeability observed in severe dengue disease. Component of the viral RNA replication complex that functions in virion assembly and antagonizes the host immune response. Its function is as follows. Required cofactor for the serine protease function of NS3. May have membrane-destabilizing activity and form viroporins. In terms of biological role, displays three enzymatic activities: serine protease, NTPase and RNA helicase. NS3 serine protease, in association with NS2B, performs its autocleavage and cleaves the polyprotein at dibasic sites in the cytoplasm: C-prM, NS2A-NS2B, NS2B-NS3, NS3-NS4A, NS4A-2K and NS4B-NS5. NS3 RNA helicase binds RNA and unwinds dsRNA in the 3' to 5' direction. Functionally, regulates the ATPase activity of the NS3 helicase activity. NS4A allows NS3 helicase to conserve energy during unwinding. Plays a role in the inhibition of the host innate immune response. Interacts with host MAVS and thereby prevents the interaction between RIGI and MAVS. In turn, IFN-beta production is impaired. Interacts with host AUP1 which mediates induction of lipophagy in host cells and facilitates production of virus progeny particles. Functions as a signal peptide for NS4B and is required for the interferon antagonism activity of the latter. Its function is as follows. Induces the formation of ER-derived membrane vesicles where the viral replication takes place. Inhibits interferon (IFN)-induced host STAT1 phosphorylation and nuclear translocation, thereby preventing the establishment of cellular antiviral state by blocking the IFN-alpha/beta pathway. In terms of biological role, replicates the viral (+) and (-) RNA genome, and performs the capping of genomes in the cytoplasm. NS5 methylates viral RNA cap at guanine N-7 and ribose 2'-O positions. Besides its role in RNA genome replication, also prevents the establishment of cellular antiviral state by blocking the interferon-alpha/beta (IFN-alpha/beta) signaling pathway. Inhibits host TYK2 and STAT2 phosphorylation, thereby preventing activation of JAK-STAT signaling pathway. May reduce immune responses by preventing the recruitment of the host PAF1 complex to interferon-responsive genes. This Aedimorphus (Red guenon) protein is Genome polyprotein.